Here is a 312-residue protein sequence, read N- to C-terminus: uncharacterized protein (312 aa).

The segment at 95–119 is disordered; sequence EKRRENPPKLTLPPLPPPAEERKKP.

It is found in the plastid. Its subcellular location is the chloroplast. This is an uncharacterized protein from Chlamydomonas moewusii (Chlamydomonas eugametos).